A 128-amino-acid chain; its full sequence is CD59 glycoprotein (128 aa).

A signal peptide spans 1–25 (MGIQGGSVLFGLLLILAVFCHSGHS). Residues 26-108 (LQCYSCPYST…ILENGGTTLS (83 aa)) form the UPAR/Ly6 domain. Cystine bridges form between cysteine 28–cysteine 51, cysteine 31–cysteine 38, cysteine 44–cysteine 64, cysteine 70–cysteine 88, and cysteine 89–cysteine 94. A glycan (N-linked (GlcNAc...) asparagine) is linked at asparagine 43. Asparagine 102 is lipidated: GPI-anchor amidated asparagine. A propeptide spans 103–128 (GGTTLSKKTVLLLVTPFLAAAWSLHP) (removed in mature form).

Interacts with T-cell surface antigen CD2. Post-translationally, N- and O-glycosylated.

The protein localises to the cell membrane. Its subcellular location is the secreted. Potent inhibitor of the complement membrane attack complex (MAC) action, which protects self-cells from damage during complement activation. Acts by binding to the beta-haipins of C8 (C8A and C8B) components of the assembling MAC, forming an intermolecular beta-sheet that prevents incorporation of the multiple copies of C9 required for complete formation of the osmolytic pore. The sequence is that of CD59 glycoprotein from Callithrix sp. (Marmoset).